The chain runs to 307 residues: Bifunctional protein FolD (307 aa).

Residues 165–167, serine 190, and isoleucine 231 contribute to the NADP(+) site; that span reads GRS.

The protein belongs to the tetrahydrofolate dehydrogenase/cyclohydrolase family. As to quaternary structure, homodimer.

It carries out the reaction (6R)-5,10-methylene-5,6,7,8-tetrahydrofolate + NADP(+) = (6R)-5,10-methenyltetrahydrofolate + NADPH. It catalyses the reaction (6R)-5,10-methenyltetrahydrofolate + H2O = (6R)-10-formyltetrahydrofolate + H(+). It participates in one-carbon metabolism; tetrahydrofolate interconversion. Catalyzes the oxidation of 5,10-methylenetetrahydrofolate to 5,10-methenyltetrahydrofolate and then the hydrolysis of 5,10-methenyltetrahydrofolate to 10-formyltetrahydrofolate. The polypeptide is Bifunctional protein FolD (Koribacter versatilis (strain Ellin345)).